Consider the following 424-residue polypeptide: Probable ribonuclease FAU-1 (424 aa).

This sequence belongs to the FAU-1 family.

Its function is as follows. Probable RNase involved in rRNA stability through maturation and/or degradation of precursor rRNAs. Binds to RNA in loop regions with AU-rich sequences. This chain is Probable ribonuclease FAU-1, found in Saccharolobus islandicus (strain L.S.2.15 / Lassen #1) (Sulfolobus islandicus).